The following is a 343-amino-acid chain: F17b-G fimbrial adhesin (343 aa).

Residues 1–22 (MTNFYKVFLAVFILVCCNISHA) form the signal peptide. Residues 23–199 (VVSFIGSTEN…LNPFTLNDTV (177 aa)) form a receptor-binding lectin domain region. Residues 65-66 (AN), 110-111 (DT), and 138-141 (STQG) contribute to the a carbohydrate site. Cys75 and Cys132 are joined by a disulfide. The tract at residues 200–343 (TSCRLLTPSA…GISTFTFSYQ (144 aa)) is fimbrillin-binding domain. Positions 287–307 (LKFGPDSPVKGNENQWQLSTG) are disordered. A compositionally biased stretch (polar residues) spans 298–307 (NENQWQLSTG).

This sequence belongs to the fimbrial protein family.

Its subcellular location is the fimbrium. Functionally, essential fimbrial adhesion factor that mediates binding to N-acetylglucosamine-containing receptors in the host intestinal microvilli, leading to colonization of the intestinal tissue, and diarrhea or septicemia. Also confers adhesiveness to laminin and basement membranes. The polypeptide is F17b-G fimbrial adhesin (f17bG) (Escherichia coli).